Consider the following 423-residue polypeptide: Limonoid 21-O-acetyltransferse (423 aa).

Catalysis depends on proton acceptor residues His-152 and Asp-362.

Belongs to the plant acyltransferase family. In terms of assembly, monomer. Mainly expressed in petioles.

It catalyses the reaction isomeliandiol + acetyl-CoA = 21-O-acetyl-isomeliandiol + CoA. It functions in the pathway secondary metabolite biosynthesis; terpenoid biosynthesis. Its function is as follows. Acetyltransferase involved in the biosynthesis of limonoids triterpene natural products such as azadirachtin, an antifeedant widely used as bioinsecticide, and possessing many medicinal applications including anti-tumoral, anti-malarial, anti-rheumatic, antibacterial, anti-inflammatory, anti-pyretic and diuretic effects. Catalyzes the formation of 21-O-acetyl-isomeliandiol from isomeliandiol. This Melia azedarach (Chinaberry tree) protein is Limonoid 21-O-acetyltransferse.